Consider the following 590-residue polypeptide: Phosphate-repressible phosphate permease pho-4 (590 aa).

8 consecutive transmembrane segments (helical) span residues 6-26 (FDYL…NIGA), 44-64 (YLQA…GVGA), 85-105 (ALLM…LTMA), 118-138 (IMGG…VQWV), 149-169 (VFLA…IIFL), 186-206 (FVMV…LLLW), 220-240 (IAGT…IFLM), and 246-266 (IVIL…PLLL). Topologically, residues 267 to 466 (RRGEVPPPPA…GALPEKGKAD (200 aa)) are cytoplasmic. The segment at 297–361 (ARRAAQNGDS…PQIKTMVGPR (65 aa)) is disordered. The segment covering 313–322 (VTSSTSNPSA) has biased composition (polar residues). Positions 325–345 (DGEKGATITKDDSSYSHDHSE) are enriched in basic and acidic residues. Helical transmembrane passes span 467–487 (VPVW…WTYG), 506–525 (GFSM…RLKL), 527–547 (VSTT…SGTW), and 561–581 (GWFI…GIII).

This sequence belongs to the inorganic phosphate transporter (PiT) (TC 2.A.20) family.

It localises to the cell membrane. Phosphate transport activity is competitively inhibited by vanadate and arsenate. In terms of biological role, high-affinity transporter for external inorganic phosphate. Acts probably as a sodium-phosphate symporter. Component of the high affinity phosphate transport system II (ptsII) necessary for scavenging phosphorus from the environment under conditions of limiting phosphorus. In Neurospora crassa (strain ATCC 24698 / 74-OR23-1A / CBS 708.71 / DSM 1257 / FGSC 987), this protein is Phosphate-repressible phosphate permease pho-4.